Consider the following 968-residue polypeptide: RNA polymerase-associated protein RapA (968 aa).

Residues 164-334 enclose the Helicase ATP-binding domain; sequence DVGRRHAPRV…FARLRLLDPN (171 aa). 177–184 lines the ATP pocket; it reads DEVGLGKT. The DEAH box motif lies at 280–283; that stretch reads DEAH. Positions 490–662 constitute a Helicase C-terminal domain; sequence RVEWLMGYLT…YLAAPENTEG (173 aa).

It belongs to the SNF2/RAD54 helicase family. RapA subfamily. Interacts with the RNAP. Has a higher affinity for the core RNAP than for the holoenzyme. Its ATPase activity is stimulated by binding to RNAP.

Functionally, transcription regulator that activates transcription by stimulating RNA polymerase (RNAP) recycling in case of stress conditions such as supercoiled DNA or high salt concentrations. Probably acts by releasing the RNAP, when it is trapped or immobilized on tightly supercoiled DNA. Does not activate transcription on linear DNA. Probably not involved in DNA repair. This Cronobacter sakazakii (strain ATCC BAA-894) (Enterobacter sakazakii) protein is RNA polymerase-associated protein RapA.